The chain runs to 359 residues: MVSLPKDRMRQLEKRFEIIESQMAKNPDSGTYVKLASEYADLQPIVTSIRTLNALSIEITELETIISDKLTDVEMRNLAQEELPPLFQKMEKLEKELQILLLPKDITDEKSAIIEIRAGTGGSEAALFVGDLFRMYERYANAYNWKVEVISLNEGEVGGYKEIIATISGKGVFSKLKFESGVHRVQRVPETETSGRIHTSAATVAVLPEAEEIDIEIRPEDIRIDTMRASGAGGQHVNTTDSAVRITHIPTGIMVVQAEKSQHQNRARALQILRARLFDIEQKKAESERSASRKNQVGSGDRSERIRTYNFPQGRVTDHRINLTLYKLDRILEGDLDELINALISDYQTALLTEMDGNG.

Gln235 bears the N5-methylglutamine mark. The disordered stretch occupies residues 284-311; it reads KAESERSASRKNQVGSGDRSERIRTYNF.

The protein belongs to the prokaryotic/mitochondrial release factor family. In terms of processing, methylated by PrmC. Methylation increases the termination efficiency of RF1.

The protein localises to the cytoplasm. Peptide chain release factor 1 directs the termination of translation in response to the peptide chain termination codons UAG and UAA. This is Peptide chain release factor 1 from Bartonella quintana (strain Toulouse) (Rochalimaea quintana).